A 391-amino-acid polypeptide reads, in one-letter code: Multidrug resistance protein MdtL (391 aa).

Helical transmembrane passes span 4–24, 42–62, 69–89, 93–113, 131–151, 158–178, 203–222, 245–265, 269–289, 293–313, 331–351, and 356–376; these read FLIC…MYLV, IAFS…GKVA, PVAI…SLAE, LFLA…VVAF, LLNG…HLIM, SLFW…LFIL, FFLS…LTFV, ALTA…LGIF, TLMI…AVSP, VSLF…GVAM, LGIA…VVGI, and MLIG…MFVA.

Belongs to the major facilitator superfamily. DHA1 family. MdtL (TC 2.A.1.2.22) subfamily.

It is found in the cell inner membrane. In terms of biological role, confers resistance to chloramphenicol. The chain is Multidrug resistance protein MdtL from Escherichia coli O17:K52:H18 (strain UMN026 / ExPEC).